Consider the following 454-residue polypeptide: Tol-Pal system protein TolB (454 aa).

The signal sequence occupies residues 1-21 (MSLRPISLMLALLLTSAPALA).

Belongs to the TolB family. As to quaternary structure, the Tol-Pal system is composed of five core proteins: the inner membrane proteins TolA, TolQ and TolR, the periplasmic protein TolB and the outer membrane protein Pal. They form a network linking the inner and outer membranes and the peptidoglycan layer.

It is found in the periplasm. In terms of biological role, part of the Tol-Pal system, which plays a role in outer membrane invagination during cell division and is important for maintaining outer membrane integrity. The polypeptide is Tol-Pal system protein TolB (Sphingopyxis alaskensis (strain DSM 13593 / LMG 18877 / RB2256) (Sphingomonas alaskensis)).